The following is a 540-amino-acid chain: CTP synthase (540 aa).

An amidoligase domain region spans residues 1-273 (MNNKDLKTKF…DDFILQHFKL (273 aa)). Serine 19 is a binding site for CTP. Residue serine 19 coordinates UTP. Position 20–25 (20–25 (SLGKGI)) interacts with ATP. Position 60 (tyrosine 60) interacts with L-glutamine. Aspartate 77 is an ATP binding site. The Mg(2+) site is built by aspartate 77 and glutamate 147. CTP-binding positions include 154–156 (DIE), 194–199 (KTKPTQ), and lysine 230. Residues 194–199 (KTKPTQ) and lysine 230 contribute to the UTP site. Positions 306–539 (YIVLHDAYLS…VEASLLNQKN (234 aa)) constitute a Glutamine amidotransferase type-1 domain. L-glutamine is bound at residue glycine 361. The active-site Nucleophile; for glutamine hydrolysis is the cysteine 388. L-glutamine contacts are provided by residues 389–392 (LGMQ), glutamate 412, and arginine 466. Active-site residues include histidine 512 and glutamate 514.

The protein belongs to the CTP synthase family. As to quaternary structure, homotetramer.

It carries out the reaction UTP + L-glutamine + ATP + H2O = CTP + L-glutamate + ADP + phosphate + 2 H(+). The enzyme catalyses L-glutamine + H2O = L-glutamate + NH4(+). The catalysed reaction is UTP + NH4(+) + ATP = CTP + ADP + phosphate + 2 H(+). The protein operates within pyrimidine metabolism; CTP biosynthesis via de novo pathway; CTP from UDP: step 2/2. Its activity is regulated as follows. Allosterically activated by GTP, when glutamine is the substrate; GTP has no effect on the reaction when ammonia is the substrate. The allosteric effector GTP functions by stabilizing the protein conformation that binds the tetrahedral intermediate(s) formed during glutamine hydrolysis. Inhibited by the product CTP, via allosteric rather than competitive inhibition. In terms of biological role, catalyzes the ATP-dependent amination of UTP to CTP with either L-glutamine or ammonia as the source of nitrogen. Regulates intracellular CTP levels through interactions with the four ribonucleotide triphosphates. The chain is CTP synthase from Onion yellows phytoplasma (strain OY-M).